Consider the following 536-residue polypeptide: Protoporphyrinogen oxidase, chloroplastic (536 aa).

Residues 1–36 (MAAAAAAMATATSATAAPPLRIRDAARRTRRRGHVR) constitute a chloroplast transit peptide. Residues 62 to 67 (GGGISG), 87 to 88 (EA), and 111 to 114 (GPNS) contribute to the FAD site. The tract at residues 248 to 272 (TIKTIQERGKNPKPPRDPRLPTPKG) is disordered. Basic and acidic residues predominate over residues 252-266 (IQERGKNPKPPRDPR). 510–512 (VAL) lines the FAD pocket.

It belongs to the protoporphyrinogen/coproporphyrinogen oxidase family. Protoporphyrinogen oxidase subfamily. Requires FAD as cofactor.

It is found in the plastid. Its subcellular location is the chloroplast. It carries out the reaction protoporphyrinogen IX + 3 O2 = protoporphyrin IX + 3 H2O2. Its pathway is porphyrin-containing compound metabolism; protoporphyrin-IX biosynthesis; protoporphyrin-IX from protoporphyrinogen-IX: step 1/1. It participates in porphyrin-containing compound metabolism; chlorophyll biosynthesis. In terms of biological role, catalyzes the 6-electron oxidation of protoporphyrinogen-IX to form protoporphyrin-IX. This is Protoporphyrinogen oxidase, chloroplastic (PPOX1) from Oryza sativa subsp. japonica (Rice).